We begin with the raw amino-acid sequence, 328 residues long: DNA-directed RNA polymerase subunit alpha 2 (328 aa).

Positions 1-234 are alpha N-terminal domain (alpha-NTD); sequence MQGSVIEFLK…EQLDAFVDLR (234 aa). An alpha C-terminal domain (alpha-CTD) region spans residues 248–328; sequence FDPILLRPVD…NWPPASLSED (81 aa).

It belongs to the RNA polymerase alpha chain family. Homodimer. The RNAP catalytic core consists of 2 alpha, 1 beta, 1 beta' and 1 omega subunit. When a sigma factor is associated with the core the holoenzyme is formed, which can initiate transcription.

It carries out the reaction RNA(n) + a ribonucleoside 5'-triphosphate = RNA(n+1) + diphosphate. In terms of biological role, DNA-dependent RNA polymerase catalyzes the transcription of DNA into RNA using the four ribonucleoside triphosphates as substrates. The polypeptide is DNA-directed RNA polymerase subunit alpha 2 (Psychromonas ingrahamii (strain DSM 17664 / CCUG 51855 / 37)).